Here is a 310-residue protein sequence, read N- to C-terminus: tRNA-cytidine(32) 2-sulfurtransferase (310 aa).

Positions 45–50 match the PP-loop motif motif; sequence SGGKDS. Residues Cys-120, Cys-123, and Cys-211 each coordinate [4Fe-4S] cluster.

It belongs to the TtcA family. As to quaternary structure, homodimer. Requires Mg(2+) as cofactor. [4Fe-4S] cluster serves as cofactor.

The protein localises to the cytoplasm. The catalysed reaction is cytidine(32) in tRNA + S-sulfanyl-L-cysteinyl-[cysteine desulfurase] + AH2 + ATP = 2-thiocytidine(32) in tRNA + L-cysteinyl-[cysteine desulfurase] + A + AMP + diphosphate + H(+). It functions in the pathway tRNA modification. Functionally, catalyzes the ATP-dependent 2-thiolation of cytidine in position 32 of tRNA, to form 2-thiocytidine (s(2)C32). The sulfur atoms are provided by the cysteine/cysteine desulfurase (IscS) system. The protein is tRNA-cytidine(32) 2-sulfurtransferase of Shewanella oneidensis (strain ATCC 700550 / JCM 31522 / CIP 106686 / LMG 19005 / NCIMB 14063 / MR-1).